Here is a 198-residue protein sequence, read N- to C-terminus: Probable chorismate pyruvate-lyase (198 aa).

Positions 73, 111, and 172 each coordinate substrate.

It belongs to the UbiC family.

It localises to the cytoplasm. It carries out the reaction chorismate = 4-hydroxybenzoate + pyruvate. It functions in the pathway cofactor biosynthesis; ubiquinone biosynthesis. Functionally, removes the pyruvyl group from chorismate, with concomitant aromatization of the ring, to provide 4-hydroxybenzoate (4HB) for the ubiquinone pathway. This Burkholderia orbicola (strain AU 1054) protein is Probable chorismate pyruvate-lyase.